Reading from the N-terminus, the 144-residue chain is Large ribosomal subunit protein uL15 (144 aa).

A disordered region spans residues 1-57; it reads MLLNTLSPAAGSKHAPKRLGRGVGSGLGKTGGRGHKGQKSRSGGKVRPGFEGGQMPL. Positions 21-31 are enriched in gly residues; sequence RGVGSGLGKTG. A compositionally biased stretch (basic residues) spans 32-44; it reads GRGHKGQKSRSGG.

It belongs to the universal ribosomal protein uL15 family. In terms of assembly, part of the 50S ribosomal subunit.

Functionally, binds to the 23S rRNA. The polypeptide is Large ribosomal subunit protein uL15 (Vibrio cholerae serotype O1 (strain ATCC 39541 / Classical Ogawa 395 / O395)).